The chain runs to 445 residues: N-succinylarginine dihydrolase (445 aa).

Substrate contacts are provided by residues 19–28, Asn110, and 137–138; these read AGLSFGNVAS and HR. Glu174 is a catalytic residue. Substrate is bound at residue Arg214. The active site involves His250. Residues Asp252 and Asn363 each contribute to the substrate site. Residue Cys369 is the Nucleophile of the active site.

It belongs to the succinylarginine dihydrolase family. As to quaternary structure, homodimer.

The catalysed reaction is N(2)-succinyl-L-arginine + 2 H2O + 2 H(+) = N(2)-succinyl-L-ornithine + 2 NH4(+) + CO2. The protein operates within amino-acid degradation; L-arginine degradation via AST pathway; L-glutamate and succinate from L-arginine: step 2/5. In terms of biological role, catalyzes the hydrolysis of N(2)-succinylarginine into N(2)-succinylornithine, ammonia and CO(2). The protein is N-succinylarginine dihydrolase of Shewanella piezotolerans (strain WP3 / JCM 13877).